A 243-amino-acid chain; its full sequence is DNA repair protein RecO (243 aa).

Belongs to the RecO family.

In terms of biological role, involved in DNA repair and RecF pathway recombination. The chain is DNA repair protein RecO from Serratia proteamaculans (strain 568).